Here is a 796-residue protein sequence, read N- to C-terminus: Armadillo repeat-containing protein wrm-1 (796 aa).

Residues 17 to 59 (NFNPMTPSTSRVSTPVRPSSTMSARQYSGSPFKAQPQNMEPSN) are disordered. Residues 462 to 504 (ESIHCIVQLIGCSDVTIVELATGTLRNIGLHNKMNKAFMVQDG) form an ARM repeat.

In terms of assembly, interacts (independently of ARM repeat) with nhr-25. Component of the beta-catenin-lit-1 complex (also called the lit-1/wrm-1 complex or the wrm-1/lit-1 kinase complex) at least composed of lit-1 and wrm-1. Interacts (via N-terminus) with lit-1; the interaction is direct and activates lit-1 kinase activity which leads to the phosphorylation of pop-1. This promotes pop-1 interaction with par-5 and translocation of pop-1 from the nucleus to the cytoplasm.

The protein localises to the cytoplasm. The protein resides in the cell cortex. It localises to the nucleus. Functionally, antagonistic role in the Wnt signaling pathway that operates in embryogenesis. When located at the cortex it has been shown to inhibit Wnt signaling during asymmetric cell division but when relocated to the nucleus it shows positive regulation. Has a role in blastomere signaling during endoderm specification. Component of the beta-catenin-lit-1 complex which promotes phosphorylation, down-regulation and subcellular relocation of pop-1. Within the complex, activates lit-1-dependent kinase activity. Can substitute for bar-1 indicating functional redundancy. Appears to have a role in centrosome positioning and can activation transcription in yeast. Involved in the development of distal tip cells (DTC) by regulating the asymmetric distribution of cye-1 and cki-1 between the daughters of Z1.a and Z4.p cells. This is Armadillo repeat-containing protein wrm-1 from Caenorhabditis elegans.